Reading from the N-terminus, the 312-residue chain is Pyridoxal kinase (312 aa).

N-acetylmethionine is present on methionine 1. Pyridoxal is bound by residues serine 12 and threonine 47. A pyridoxal 5'-phosphate-binding site is contributed by threonine 47. Serine 59 is subject to Phosphoserine. Aspartate 113 is an ATP binding site. Aspartate 113 contributes to the Na(+) binding site. Mg(2+) is bound at residue aspartate 118. Residue threonine 148 coordinates Na(+). 150 to 153 contributes to the ATP binding site; the sequence is NQFE. Serine 164 bears the Phosphoserine mark. Threonine 186 contributes to the Na(+) binding site. 186-187 is a binding site for ATP; the sequence is TS. Residue serine 213 is modified to Phosphoserine. ATP is bound by residues 226-228 and threonine 233; that span reads VDP. 234–235 provides a ligand contact to pyridoxal 5'-phosphate; the sequence is GD. The Proton acceptor role is filled by aspartate 235. Serine 285 is modified (phosphoserine).

It belongs to the pyridoxine kinase family. In terms of assembly, homodimer. It depends on Zn(2+) as a cofactor. Mg(2+) is required as a cofactor.

The protein resides in the cytoplasm. It is found in the cytosol. It carries out the reaction pyridoxal + ATP = pyridoxal 5'-phosphate + ADP + H(+). It catalyses the reaction pyridoxamine + ATP = pyridoxamine 5'-phosphate + ADP + H(+). The catalysed reaction is pyridoxine + ATP = pyridoxine 5'-phosphate + ADP + H(+). It functions in the pathway cofactor metabolism; pyridoxal 5'-phosphate salvage; pyridoxal 5'-phosphate from pyridoxal: step 1/1. The protein operates within cofactor metabolism; pyridoxal 5'-phosphate salvage; pyridoxine 5'-phosphate from pyridoxine: step 1/1. It participates in cofactor metabolism; pyridoxal 5'-phosphate salvage; pyridoxamine 5'-phosphate from pyridoxamine: step 1/1. Its activity is regulated as follows. Activity is increased in the presence of K(+)or Na(+). Catalyzes the phosphorylation of the dietary vitamin B6 vitamers pyridoxal (PL), pyridoxine (PN) and pyridoxamine (PM) to form pyridoxal 5'-phosphate (PLP), pyridoxine 5'-phosphate (PNP) and pyridoxamine 5'-phosphate (PMP), respectively. PLP is the active form of vitamin B6, and acts as a cofactor for over 140 different enzymatic reactions. The protein is Pyridoxal kinase (Pdxk) of Rattus norvegicus (Rat).